The chain runs to 103 residues: NADH-quinone oxidoreductase subunit K (103 aa).

The next 3 helical transmembrane spans lie at 5–25 (VPTS…LIGV), 32–52 (ILIF…LVAF), and 66–86 (FIVM…IVAI).

This sequence belongs to the complex I subunit 4L family. As to quaternary structure, NDH-1 is composed of 15 different subunits. Subunits NuoA, H, J, K, L, M, N constitute the membrane sector of the complex.

The protein resides in the cell membrane. The enzyme catalyses a quinone + NADH + 5 H(+)(in) = a quinol + NAD(+) + 4 H(+)(out). In terms of biological role, NDH-1 shuttles electrons from NADH, via FMN and iron-sulfur (Fe-S) centers, to quinones in the respiratory chain. The immediate electron acceptor for the enzyme in this species is believed to be a menaquinone. Couples the redox reaction to proton translocation (for every two electrons transferred, four hydrogen ions are translocated across the cytoplasmic membrane), and thus conserves the redox energy in a proton gradient. The protein is NADH-quinone oxidoreductase subunit K of Deinococcus radiodurans (strain ATCC 13939 / DSM 20539 / JCM 16871 / CCUG 27074 / LMG 4051 / NBRC 15346 / NCIMB 9279 / VKM B-1422 / R1).